The primary structure comprises 131 residues: MASPSKKVVRKKKEKKNIPNGVAHIQATFNNTIITITDPVGNVVAWSSAGSKGFKGSRKSTPFAAQIAAEECARKAQEHGMRSVEVFVKGPGSGRESALRALQAAGFHVNFIRDVTPIPHNGCRPPKRRRV.

This sequence belongs to the universal ribosomal protein uS11 family. In terms of assembly, part of the 30S ribosomal subunit. Interacts with proteins S7 and S18. Binds to IF-3.

Located on the platform of the 30S subunit, it bridges several disparate RNA helices of the 16S rRNA. Forms part of the Shine-Dalgarno cleft in the 70S ribosome. This is Small ribosomal subunit protein uS11 from Geobacter sulfurreducens (strain ATCC 51573 / DSM 12127 / PCA).